We begin with the raw amino-acid sequence, 493 residues long: Ketol-acid reductoisomerase (NADP(+)) (493 aa).

The 195-residue stretch at 14 to 208 folds into the KARI N-terminal Rossmann domain; it reads LDQLGRCRFM…GGHRAGVLES (195 aa). Residues 45–48, Arg-68, Arg-76, Ser-78, and 108–110 contribute to the NADP(+) site; these read CGAQ and DKQ. His-132 is a catalytic residue. Position 158 (Gly-158) interacts with NADP(+). KARI C-terminal knotted domains are found at residues 209–345 and 346–486; these read SFVA…APKG and ENIK…MTDM. Mg(2+) is bound by residues Asp-217, Glu-221, Glu-390, and Glu-394. Ser-415 is a substrate binding site.

The protein belongs to the ketol-acid reductoisomerase family. Mg(2+) is required as a cofactor.

The enzyme catalyses (2R)-2,3-dihydroxy-3-methylbutanoate + NADP(+) = (2S)-2-acetolactate + NADPH + H(+). It catalyses the reaction (2R,3R)-2,3-dihydroxy-3-methylpentanoate + NADP(+) = (S)-2-ethyl-2-hydroxy-3-oxobutanoate + NADPH + H(+). Its pathway is amino-acid biosynthesis; L-isoleucine biosynthesis; L-isoleucine from 2-oxobutanoate: step 2/4. It participates in amino-acid biosynthesis; L-valine biosynthesis; L-valine from pyruvate: step 2/4. In terms of biological role, involved in the biosynthesis of branched-chain amino acids (BCAA). Catalyzes an alkyl-migration followed by a ketol-acid reduction of (S)-2-acetolactate (S2AL) to yield (R)-2,3-dihydroxy-isovalerate. In the isomerase reaction, S2AL is rearranged via a Mg-dependent methyl migration to produce 3-hydroxy-3-methyl-2-ketobutyrate (HMKB). In the reductase reaction, this 2-ketoacid undergoes a metal-dependent reduction by NADPH to yield (R)-2,3-dihydroxy-isovalerate. This is Ketol-acid reductoisomerase (NADP(+)) from Histophilus somni (strain 129Pt) (Haemophilus somnus).